Here is a 238-residue protein sequence, read N- to C-terminus: Ribosomal RNA small subunit methyltransferase G (238 aa).

S-adenosyl-L-methionine is bound by residues G77, F82, 128–129 (AE), and R147.

Belongs to the methyltransferase superfamily. RNA methyltransferase RsmG family.

It localises to the cytoplasm. Its function is as follows. Specifically methylates the N7 position of guanine in position 535 of 16S rRNA. The protein is Ribosomal RNA small subunit methyltransferase G of Listeria welshimeri serovar 6b (strain ATCC 35897 / DSM 20650 / CCUG 15529 / CIP 8149 / NCTC 11857 / SLCC 5334 / V8).